A 339-amino-acid polypeptide reads, in one-letter code: Phosphatidylglycerol--prolipoprotein diacylglyceryl transferase (339 aa).

3 consecutive transmembrane segments (helical) span residues 43-63 (FTIA…YWLG), 81-101 (ILWM…LTSW), and 121-141 (NGGI…IYFA). Arg-167 is an a 1,2-diacyl-sn-glycero-3-phospho-(1'-sn-glycerol) binding site. 2 consecutive transmembrane segments (helical) span residues 231–251 (FTQL…YFWL) and 300–320 (LWTD…WMLW).

The protein belongs to the Lgt family.

The protein resides in the cell membrane. It carries out the reaction L-cysteinyl-[prolipoprotein] + a 1,2-diacyl-sn-glycero-3-phospho-(1'-sn-glycerol) = an S-1,2-diacyl-sn-glyceryl-L-cysteinyl-[prolipoprotein] + sn-glycerol 1-phosphate + H(+). It functions in the pathway protein modification; lipoprotein biosynthesis (diacylglyceryl transfer). Functionally, catalyzes the transfer of the diacylglyceryl group from phosphatidylglycerol to the sulfhydryl group of the N-terminal cysteine of a prolipoprotein, the first step in the formation of mature lipoproteins. The polypeptide is Phosphatidylglycerol--prolipoprotein diacylglyceryl transferase (Deinococcus radiodurans (strain ATCC 13939 / DSM 20539 / JCM 16871 / CCUG 27074 / LMG 4051 / NBRC 15346 / NCIMB 9279 / VKM B-1422 / R1)).